We begin with the raw amino-acid sequence, 225 residues long: UPF0173 metal-dependent hydrolase Tneu_1348 (225 aa).

The protein belongs to the UPF0173 family.

The chain is UPF0173 metal-dependent hydrolase Tneu_1348 from Pyrobaculum neutrophilum (strain DSM 2338 / JCM 9278 / NBRC 100436 / V24Sta) (Thermoproteus neutrophilus).